A 987-amino-acid chain; its full sequence is uncharacterized protein (987 aa).

2 helical membrane passes run 12-32 (FIYL…SVSG) and 958-978 (VENN…LGIL).

To M.jannaschii MJ1393 and A.fulgidus AF2028.

The protein resides in the cell membrane. This is an uncharacterized protein from Methanocaldococcus jannaschii (strain ATCC 43067 / DSM 2661 / JAL-1 / JCM 10045 / NBRC 100440) (Methanococcus jannaschii).